Reading from the N-terminus, the 216-residue chain is MOB kinase activator-like 1 homolog C (216 aa).

Zn(2+) is bound by residues cysteine 78, cysteine 83, histidine 160, and histidine 165.

Belongs to the MOB1/phocein family.

This Dictyostelium discoideum (Social amoeba) protein is MOB kinase activator-like 1 homolog C (mobC).